The following is a 536-amino-acid chain: Coilin (536 aa).

The interval 96–316 (AETCNDGAQN…QHSQSPTSDS (221 aa)) is disordered. Positions 171–180 (KTHKGKRTKK) are enriched in basic residues. The span at 181-192 (KSEAPIENPPDK) shows a compositional bias: basic and acidic residues. The span at 213-238 (QTSSSDSSDTSSCSDQPTPTTQQKPQ) shows a compositional bias: low complexity. Polar residues-rich tracts occupy residues 239–257 (SSAK…THSV) and 303–316 (THIQ…TSDS). A run of 2 repeats spans residues 353 to 358 (RGRGRG) and 380 to 385 (RGRGRG). Positions 353-385 (RGRGRGEDFSWRGQRGRWFRGQGNNSNRGRGRG) are 2 X 6 AA repeats of R-G-R-G-R-G. The disordered stretch occupies residues 368–387 (GRWFRGQGNNSNRGRGRGDS). Low complexity predominate over residues 371–380 (FRGQGNNSNR). In terms of domain architecture, Tudor; atypical spans 425–523 (DYSSLPLLAA…VMLNWNTLIE (99 aa)).

The protein belongs to the coilin family. In terms of tissue distribution, expressed in both oocytes and somatic cells.

Its subcellular location is the nucleus. The polypeptide is Coilin (coil) (Xenopus laevis (African clawed frog)).